Here is a 331-residue protein sequence, read N- to C-terminus: Glycerophosphodiester phosphodiesterase 1 (331 aa).

Over 1-2 (MW) the chain is Cytoplasmic. Residues 3 to 23 (LWEEQGGLMGPFSFLLLVLLL) form a helical membrane-spanning segment. Over 24-254 (LTRSPFNACL…WKQSMFVALD (231 aa)) the chain is Lumenal. Positions 65-331 (VSAIAHRGGS…SMLEDCTPEF (267 aa)) constitute a GP-PDE domain. 2 residues coordinate Mg(2+): glutamate 97 and aspartate 99. Asparagine 168 carries N-linked (GlcNAc...) asparagine glycosylation. Residue aspartate 174 coordinates Mg(2+). A glycan (N-linked (GlcNAc...) asparagine) is linked at asparagine 198. A helical transmembrane segment spans residues 255–275 (ILLDWSMHNILWYLCGVSAFL). The Cytoplasmic portion of the chain corresponds to 276–331 (AQKDFISPDYVKKWSAKGIQVVAWTVNTFDEKSYYESHLGSSYITDSMLEDCTPEF).

This sequence belongs to the glycerophosphoryl diester phosphodiesterase family. Interacts with PRAF2. Interacts with RGS16. Mg(2+) serves as cofactor. N-glycosylated.

It localises to the cell membrane. It is found in the cytoplasmic vesicle membrane. The catalysed reaction is sn-glycero-3-phospho-1D-myo-inositol + H2O = myo-inositol + sn-glycerol 3-phosphate + H(+). It carries out the reaction 1-O-(1Z-octadecenyl)-sn-glycero-3-phospho-(N-5Z,8Z,11Z,14Z-eicosatetraenoyl)-ethanolamine + H2O = 1-O-(1Z-octadecenyl)-sn-glycero-3-phosphate + N-(5Z,8Z,11Z,14Z-eicosatetraenoyl)-ethanolamine + H(+). It catalyses the reaction 1-O-(1Z-octadecenyl)-sn-glycero-3-phospho-(N-9Z-octadecenoyl)-ethanolamine + H2O = 1-O-(1Z-octadecenyl)-sn-glycero-3-phosphate + N-(9Z-octadecenoyl) ethanolamine + H(+). The enzyme catalyses 1-O-(1Z-octadecenyl)-sn-glycero-3-phospho-N-hexadecanoyl-ethanolamine + H2O = 1-O-(1Z-octadecenyl)-sn-glycero-3-phosphate + N-hexadecanoylethanolamine + H(+). The catalysed reaction is N-(4Z,7Z,10Z,13Z,16Z,19Z)-docosahexaenoyl-sn-glycero-3-phosphoethanolamine + H2O = N-(4Z,7Z,10Z,13Z,16Z,19Z)-docosahexaenoyl ethanolamine + sn-glycerol 3-phosphate + H(+). It carries out the reaction N-eicosanoyl-sn-glycero-3-phosphoethanolamine + H2O = N-eicosanoyl ethanolamine + sn-glycerol 3-phosphate + H(+). It catalyses the reaction N-hexadecanoyl-sn-glycero-3-phosphoethanolamine + H2O = N-hexadecanoylethanolamine + sn-glycerol 3-phosphate + H(+). The enzyme catalyses N-(9Z-octadecenoyl)-sn-glycero-3-phosphoethanolamine + H2O = N-(9Z-octadecenoyl) ethanolamine + sn-glycerol 3-phosphate + H(+). The catalysed reaction is N-(5Z,8Z,11Z,14Z-eicosatetraenoyl)-sn-glycero-3-phosphoethanolamine + H2O = N-(5Z,8Z,11Z,14Z-eicosatetraenoyl)-ethanolamine + sn-glycerol 3-phosphate + H(+). Inhibited by EDTA, calcium chloride, and zinc chloride. Enhanced by magnesium chloride. Glycerophosphodiester phosphodiesterase activity can be modulated by G-protein signaling pathways. In terms of biological role, hydrolyzes the phosphodiester bond of glycerophosphodiesters such as glycerophosphoinositol (GroPIns) and glycerophosphoethanolamine (GroPEth), to yield a glycerol phosphate and an alcohol. Hydrolyzes glycerophospho-N-acylethanolamines to N-acylethanolamines in the brain and participates in bioactive N-acylethanolamine biosynthesis such as anandamide (an endocannabinoid), N-palmitoylethanolamine (an anti-inflammatory), and N-oleoylethanolamine (an anorexic). In addition, has a lysophospholipase D activity by hydrolyzing N-acyl-lysoplasmenylethanolamine (N-acyl-lysoPlsEt) to N-acylethanolamine. However lysophospholipase D activity is lower than glycerophosphodiester phosphodiesterase activity. Has little or no activity towards glycerophosphocholine. This is Glycerophosphodiester phosphodiesterase 1 from Bos taurus (Bovine).